Reading from the N-terminus, the 694-residue chain is DNA-directed RNA polymerase subunit beta' (694 aa).

Residues Cys-69, Cys-71, Cys-87, and Cys-90 each coordinate Zn(2+). Mg(2+) is bound by residues Asp-489, Asp-491, and Asp-493.

The protein belongs to the RNA polymerase beta' chain family. RpoC1 subfamily. In terms of assembly, in plastids the minimal PEP RNA polymerase catalytic core is composed of four subunits: alpha, beta, beta', and beta''. When a (nuclear-encoded) sigma factor is associated with the core the holoenzyme is formed, which can initiate transcription. Requires Mg(2+) as cofactor. The cofactor is Zn(2+).

It is found in the plastid. The protein resides in the chloroplast. It catalyses the reaction RNA(n) + a ribonucleoside 5'-triphosphate = RNA(n+1) + diphosphate. DNA-dependent RNA polymerase catalyzes the transcription of DNA into RNA using the four ribonucleoside triphosphates as substrates. This is DNA-directed RNA polymerase subunit beta' from Gossypium barbadense (Sea Island cotton).